The chain runs to 471 residues: Mannose-1-phosphate guanylyltransferase (471 aa).

This sequence belongs to the mannose-6-phosphate isomerase type 2 family.

It carries out the reaction alpha-D-mannose 1-phosphate + GTP + H(+) = GDP-alpha-D-mannose + diphosphate. The protein operates within nucleotide-sugar biosynthesis; GDP-alpha-D-mannose biosynthesis; GDP-alpha-D-mannose from alpha-D-mannose 1-phosphate (GTP route): step 1/1. Involved in the biosynthesis of the K2 capsular polysaccharide biosynthesis. This Klebsiella pneumoniae protein is Mannose-1-phosphate guanylyltransferase (manC).